A 156-amino-acid polypeptide reads, in one-letter code: Insulin (156 aa).

The signal sequence occupies residues 1-31; the sequence is MSKFLLQSHSANACLLTLLLTLASNLDISLA. Intrachain disulfides connect cysteine 37-cysteine 114, cysteine 49-cysteine 119, cysteine 61-cysteine 128, and cysteine 112-cysteine 115. A propeptide spans 79 to 93 (c peptide beta); it reads DTENVNDKLRGILLN. A propeptide spans 96 to 102 (c peptide alpha); it reads EAFSYLT. Positions 141-156 are cleaved as a propeptide — d peptide; that stretch reads TGRSNSGHAQLEDNFS. A propeptide spans 144 to 156 (d peptide short form); it reads SNSGHAQLEDNFS. Glutamate 152 carries the post-translational modification 4-carboxyglutamate.

Belongs to the insulin family. In terms of assembly, heterodimer of a B chain or a B chain' and an A chain probably linked by three disulfide bonds. In terms of tissue distribution, expressed in the central region of the cerebral ganglia mostly within the F and C clusters.

The protein localises to the secreted. Involved in glucose metabolism. This is Insulin (PIN) from Aplysia californica (California sea hare).